The primary structure comprises 184 residues: Photosystem I assembly protein Ycf4 (184 aa).

The next 2 membrane-spanning stretches (helical) occupy residues 20 to 40 (GNFF…VVGI) and 64 to 84 (IVMS…WCTI).

The protein belongs to the Ycf4 family.

Its subcellular location is the plastid. The protein resides in the chloroplast thylakoid membrane. In terms of biological role, seems to be required for the assembly of the photosystem I complex. This is Photosystem I assembly protein Ycf4 from Citrus sinensis (Sweet orange).